A 189-amino-acid chain; its full sequence is uncharacterized protein (189 aa).

The region spanning 1–174 (MKCWTLGDRV…GMEKGVREAL (174 aa)) is the Macro domain.

This is an uncharacterized protein from Aeropyrum pernix (strain ATCC 700893 / DSM 11879 / JCM 9820 / NBRC 100138 / K1).